We begin with the raw amino-acid sequence, 528 residues long: Phosphoenolpyruvate carboxykinase (ATP) (528 aa).

Positions 56, 192, and 198 each coordinate substrate. Residues K198, H217, and 233 to 241 (GLSGTGKTT) each bind ATP. 2 residues coordinate Mn(2+): K198 and H217. D254 contacts Mn(2+). Residues E282, R319, and T444 each contribute to the ATP site. R319 contributes to the substrate binding site.

The protein belongs to the phosphoenolpyruvate carboxykinase (ATP) family. The cofactor is Mn(2+).

The protein resides in the cytoplasm. The enzyme catalyses oxaloacetate + ATP = phosphoenolpyruvate + ADP + CO2. It functions in the pathway carbohydrate biosynthesis; gluconeogenesis. Involved in the gluconeogenesis. Catalyzes the conversion of oxaloacetate (OAA) to phosphoenolpyruvate (PEP) through direct phosphoryl transfer between the nucleoside triphosphate and OAA. This Bacillus cereus (strain AH187) protein is Phosphoenolpyruvate carboxykinase (ATP).